The chain runs to 559 residues: Potassium-transporting ATPase potassium-binding subunit (559 aa).

12 consecutive transmembrane segments (helical) span residues 6–26 (FLLIASFLLLLFLLARPLGNV), 63–83 (LLAILLLNVFGLFVLFAMLML), 131–151 (VGLTVQNFLSAASGIAVIFAL), 173–193 (ITLWVLLPISLVIALFFIQQG), 253–273 (FVQMLAIFLIPAALCFAFGDV), 283–303 (LLWAMSLIFVVCAALVMWAEW), 327–347 (FGILASSLYAVVTTAASCGAV), 356–376 (ALGGMIPLWLMQIGEVVFGGV), 379–399 (GLYGMLLFVLLAVFIAGLMIG), 416–436 (LTALAILVTPALVLMGTALAL), 484–504 (LLAFCMFVGRFGVIVPVMAIA), and 524–544 (GALFVGLLIGTVLLVGALTFI).

Belongs to the KdpA family. The system is composed of three essential subunits: KdpA, KdpB and KdpC.

The protein localises to the cell inner membrane. Functionally, part of the high-affinity ATP-driven potassium transport (or Kdp) system, which catalyzes the hydrolysis of ATP coupled with the electrogenic transport of potassium into the cytoplasm. This subunit binds the periplasmic potassium ions and delivers the ions to the membrane domain of KdpB through an intramembrane tunnel. In Enterobacter sp. (strain 638), this protein is Potassium-transporting ATPase potassium-binding subunit.